The primary structure comprises 133 residues: Interleukin-4 (133 aa).

Positions 1–24 (MGLTSQLIPTLVCLLVCTSNFAHG) are cleaved as a signal peptide. 3 cysteine pairs are disulfide-bonded: C27–C133, C48–C85, and C70–C105. 4 N-linked (GlcNAc...) asparagine glycosylation sites follow: N62, N96, N102, and N108.

This sequence belongs to the IL-4/IL-13 family.

The protein localises to the secreted. Its function is as follows. Participates in at least several B-cell activation processes as well as of other cell types. It is a costimulator of DNA-synthesis. It induces the expression of class II MHC molecules on resting B-cells. It enhances both secretion and cell surface expression of IgE and IgG1. It also regulates the expression of the low affinity Fc receptor for IgE (CD23) on both lymphocytes and monocytes. Positively regulates IL31RA expression in macrophages. Stimulates autophagy in dendritic cells by interfering with mTORC1 signaling and through the induction of RUFY4. In Lama glama (Llama), this protein is Interleukin-4 (IL4).